A 492-amino-acid chain; its full sequence is Glutamyl-tRNA(Gln) amidotransferase subunit A (492 aa).

Active-site charge relay system residues include Lys-78 and Ser-158. The active-site Acyl-ester intermediate is the Ser-182.

The protein belongs to the amidase family. GatA subfamily. In terms of assembly, heterotrimer of A, B and C subunits.

The catalysed reaction is L-glutamyl-tRNA(Gln) + L-glutamine + ATP + H2O = L-glutaminyl-tRNA(Gln) + L-glutamate + ADP + phosphate + H(+). Functionally, allows the formation of correctly charged Gln-tRNA(Gln) through the transamidation of misacylated Glu-tRNA(Gln) in organisms which lack glutaminyl-tRNA synthetase. The reaction takes place in the presence of glutamine and ATP through an activated gamma-phospho-Glu-tRNA(Gln). The polypeptide is Glutamyl-tRNA(Gln) amidotransferase subunit A (Orientia tsutsugamushi (strain Ikeda) (Rickettsia tsutsugamushi)).